The chain runs to 424 residues: GDP-fucose protein O-fucosyltransferase 2 (424 aa).

The N-terminal stretch at 1–20 is a signal peptide; it reads MHFFPIQLLVLFFAEKIAFA. 51-55 contributes to the GDP-beta-L-fucose binding site; the sequence is GEGFN. The active-site Proton acceptor is the Glu52. Cys154 and Cys187 are joined by a disulfide. Residue Asn205 is glycosylated (N-linked (GlcNAc...) asparagine). GDP-beta-L-fucose contacts are provided by residues 288-290, Asp366, and 383-384; these read HWR and TF. Cys407 and Cys414 are oxidised to a cystine.

The protein belongs to the glycosyltransferase 68 family. As to expression, expressed in the anterior part of embryos, in the hypodermal and neuronal cells of the head. Expressed at different levels in a variety of cell types after hatching, including neuronal, hypodermal, muscle, intestinal, and somatic gonadal cells. Expressed in the nerve ring around the pharynx, in dorsal and ventral nerve cords, intestine, and a variety of hypodermal cells of L1-L3 larvae. Expressed in gonadal sheath cells, spermatheca, and tissues surrounding the vulva of adult hermaphrodites, and in the body wall muscle and hypodermal cells of adults of both sexes.

Its subcellular location is the endoplasmic reticulum. It localises to the golgi apparatus. The catalysed reaction is L-seryl-[protein] + GDP-beta-L-fucose = 3-O-(alpha-L-fucosyl)-L-seryl-[protein] + GDP + H(+). The enzyme catalyses L-threonyl-[protein] + GDP-beta-L-fucose = 3-O-(alpha-L-fucosyl)-L-threonyl-[protein] + GDP + H(+). It participates in protein modification; protein glycosylation. Its function is as follows. Catalyzes the reaction that attaches fucose through an O-glycosidic linkage to a conserved serine or threonine residue in the consensus sequence C1-X-X-S/T-C2 of thrombospondin type I repeats (TSRs) where C1 and C2 are the first and second cysteines of the repeat, respectively. O-fucosylates members of several protein families including the ADAMTS superfamily and the thrombospondin (TSP) and spondin families. In Caenorhabditis elegans, this protein is GDP-fucose protein O-fucosyltransferase 2 (pad-2).